The chain runs to 214 residues: UPF0758 protein (214 aa).

Residues 92 to 214 enclose the MPN domain; it reads VLSSWQALLD…ELSFRAEGLL (123 aa). Positions 163, 165, and 176 each coordinate Zn(2+). Residues 163–176 carry the JAMM motif motif; sequence HNHPSGDPTPSQAD.

The protein belongs to the UPF0758 family.

The sequence is that of UPF0758 protein from Rhodobacter capsulatus (Rhodopseudomonas capsulata).